Here is a 107-residue protein sequence, read N- to C-terminus: Large ribosomal subunit protein uL24 (107 aa).

Belongs to the universal ribosomal protein uL24 family. Part of the 50S ribosomal subunit.

One of two assembly initiator proteins, it binds directly to the 5'-end of the 23S rRNA, where it nucleates assembly of the 50S subunit. Functionally, one of the proteins that surrounds the polypeptide exit tunnel on the outside of the subunit. This is Large ribosomal subunit protein uL24 from Streptomyces griseus subsp. griseus (strain JCM 4626 / CBS 651.72 / NBRC 13350 / KCC S-0626 / ISP 5235).